A 314-amino-acid chain; its full sequence is MSAAEAGGVFHRARGRTLDAFPAEKESEWKGPFYFILGADPQFGLMKAWSTGDCDNGGDEWEQEIRLTEQAVQAINKLNPKPKFFVLCGDLIHAMPGKPWRTEQTEDLKRVLRTVDRAIPLVLVSGNHDIGNAPTAETVDEFCRTWGDDYFSFWVGGVLFLVLNSQFYENPSKCPSLKQAQDQWLDEQLSIARQRHCQHAIIFQHIPLFLESIDEDDDYYFNLSKSTRKKLADKFIHAGVKVVFSGHYHRNAGGTYQNLDMVVSSAIGCQLGRDPHGLRVVVVTAEKIVHRYYSLDELSEKGIEDDLMDLIKKK.

A Phosphoserine modification is found at Ser-2. The interval 47-250 (KAWSTGDCDN…KVVFSGHYHR (204 aa)) is catalytic. Residues Asp-53, Asp-90, Asn-127, and His-247 each contribute to the a divalent metal cation site. Position 294 is a phosphoserine (Ser-294).

This sequence belongs to the metallophosphoesterase superfamily. CPPED1 family. It depends on a divalent metal cation as a cofactor.

It localises to the cytoplasm. It carries out the reaction O-phospho-L-seryl-[protein] + H2O = L-seryl-[protein] + phosphate. It catalyses the reaction O-phospho-L-threonyl-[protein] + H2O = L-threonyl-[protein] + phosphate. Protein phosphatase that dephosphorylates AKT family kinase specifically at 'Ser-473', blocking cell cycle progression and promoting cell apoptosis. May play an inhibitory role in glucose uptake by adipocytes. This is Serine/threonine-protein phosphatase CPPED1 (CPPED1) from Pongo abelii (Sumatran orangutan).